A 110-amino-acid chain; its full sequence is Thiosulfate sulfurtransferase GlpE (110 aa).

One can recognise a Rhodanese domain in the interval 17 to 105 (KQEGAVVVDI…WRATYPAETA (89 aa)). The active-site Cysteine persulfide intermediate is Cys65.

Belongs to the GlpE family.

Its subcellular location is the cytoplasm. The enzyme catalyses thiosulfate + hydrogen cyanide = thiocyanate + sulfite + 2 H(+). It catalyses the reaction thiosulfate + [thioredoxin]-dithiol = [thioredoxin]-disulfide + hydrogen sulfide + sulfite + 2 H(+). Functionally, transferase that catalyzes the transfer of sulfur from thiosulfate to thiophilic acceptors such as cyanide or dithiols. May function in a CysM-independent thiosulfate assimilation pathway by catalyzing the conversion of thiosulfate to sulfite, which can then be used for L-cysteine biosynthesis. In Pseudomonas putida (strain GB-1), this protein is Thiosulfate sulfurtransferase GlpE.